Reading from the N-terminus, the 311-residue chain is 4-diphosphocytidyl-2-C-methyl-D-erythritol kinase (311 aa).

The active site involves Lys-16. Position 100 to 110 (100 to 110) interacts with ATP; the sequence is PIGAGLAGGSS. The active site involves Asp-142.

It belongs to the GHMP kinase family. IspE subfamily.

It carries out the reaction 4-CDP-2-C-methyl-D-erythritol + ATP = 4-CDP-2-C-methyl-D-erythritol 2-phosphate + ADP + H(+). It participates in isoprenoid biosynthesis; isopentenyl diphosphate biosynthesis via DXP pathway; isopentenyl diphosphate from 1-deoxy-D-xylulose 5-phosphate: step 3/6. Its function is as follows. Catalyzes the phosphorylation of the position 2 hydroxy group of 4-diphosphocytidyl-2C-methyl-D-erythritol. In Prochlorococcus marinus (strain MIT 9301), this protein is 4-diphosphocytidyl-2-C-methyl-D-erythritol kinase.